We begin with the raw amino-acid sequence, 120 residues long: Large ribosomal subunit protein uL22 (120 aa).

The protein belongs to the universal ribosomal protein uL22 family. Part of the 50S ribosomal subunit.

In terms of biological role, this protein binds specifically to 23S rRNA; its binding is stimulated by other ribosomal proteins, e.g. L4, L17, and L20. It is important during the early stages of 50S assembly. It makes multiple contacts with different domains of the 23S rRNA in the assembled 50S subunit and ribosome. Its function is as follows. The globular domain of the protein is located near the polypeptide exit tunnel on the outside of the subunit, while an extended beta-hairpin is found that lines the wall of the exit tunnel in the center of the 70S ribosome. The chain is Large ribosomal subunit protein uL22 from Borreliella afzelii (strain PKo) (Borrelia afzelii).